Here is a 245-residue protein sequence, read N- to C-terminus: 1-(5-phosphoribosyl)-5-[(5-phosphoribosylamino)methylideneamino] imidazole-4-carboxamide isomerase (245 aa).

Asp8 (proton acceptor) is an active-site residue. The active-site Proton donor is Asp129.

The protein belongs to the HisA/HisF family.

The protein resides in the cytoplasm. The enzyme catalyses 1-(5-phospho-beta-D-ribosyl)-5-[(5-phospho-beta-D-ribosylamino)methylideneamino]imidazole-4-carboxamide = 5-[(5-phospho-1-deoxy-D-ribulos-1-ylimino)methylamino]-1-(5-phospho-beta-D-ribosyl)imidazole-4-carboxamide. Its pathway is amino-acid biosynthesis; L-histidine biosynthesis; L-histidine from 5-phospho-alpha-D-ribose 1-diphosphate: step 4/9. This Heliobacterium modesticaldum (strain ATCC 51547 / Ice1) protein is 1-(5-phosphoribosyl)-5-[(5-phosphoribosylamino)methylideneamino] imidazole-4-carboxamide isomerase.